A 640-amino-acid chain; its full sequence is Calpain-5 (640 aa).

Residues Leu26–Ile343 enclose the Calpain catalytic domain. Active-site residues include Cys81, His252, and Asn284. Residues Asn344–Arg496 form a domain III region. The 119-residue stretch at Arg499–Gly617 folds into the C2 domain.

It belongs to the peptidase C2 family.

In terms of biological role, calcium-regulated non-lysosomal thiol-protease. The polypeptide is Calpain-5 (Capn5) (Rattus norvegicus (Rat)).